The primary structure comprises 1894 residues: Plexin-A1 (1894 aa).

The N-terminal stretch at 1–27 is a signal peptide; the sequence is MPLPPLSSRTLLLLLLLLLRGVWIAIS. The region spanning 28-510 is the Sema domain; sequence SPPAGLGPQP…TEKQVTQVPV (483 aa). Residues 28–1242 are Extracellular-facing; it reads SPPAGLGPQP…VYSDSLLTLP (1215 aa). Asn-75 is a glycosylation site (N-linked (GlcNAc...) asparagine). Intrachain disulfides connect Cys-93/Cys-102, Cys-128/Cys-136, Cys-284/Cys-405, Cys-300/Cys-356, Cys-374/Cys-393, Cys-513/Cys-530, Cys-519/Cys-561, Cys-522/Cys-539, Cys-533/Cys-545, and Cys-596/Cys-615. Residues Asn-658, Asn-670, and Asn-699 are each glycosylated (N-linked (GlcNAc...) asparagine). 4 consecutive IPT/TIG domains span residues 862 to 957, 959 to 1043, 1046 to 1145, and 1148 to 1234; these read PKIL…FTFV, PTFY…YNYT, PTIL…FLYY, and PVLE…LQVY. Asn-1041 carries N-linked (GlcNAc...) asparagine glycosylation. N-linked (GlcNAc...) asparagine glycosylation is found at Asn-1185 and Asn-1210. The helical transmembrane segment at 1243 to 1263 threads the bilayer; it reads AIVGIGGGGGLLLLVIVAVLI. Positions 1262–1315 form a coiled coil; sequence LIAYKRKSRDADRTLKRLQLQMDNLESRVALECKEAFAELQTDIHELTSDLDGA. At 1264 to 1894 the chain is on the cytoplasmic side; that stretch reads AYKRKSRDAD…QVVDTMALSS (631 aa).

The protein belongs to the plexin family. Interacts directly with NRP1 and NRP2. Interacts with PLXN1B. Interacts with FARP2, RND1 and KDR/VEGFR2. Binding of SEMA3A leads to dissociation of FARP2. Interacts with CRMP1, DPYSL2/CRMP2, DPYSL3/CRMP3 and DPYSL4/CRMP4. Interacts (via TIG domains) with TREM2; the interaction mediates SEMA6D binding and signaling through TYROBP. In terms of tissue distribution, ubiquitous.

The protein localises to the cell membrane. Its function is as follows. Coreceptor for SEMA3A, SEMA3C, SEMA3F and SEMA6D. Necessary for signaling by class 3 semaphorins and subsequent remodeling of the cytoskeleton. Plays a role in axon guidance, invasive growth and cell migration. Class 3 semaphorins bind to a complex composed of a neuropilin and a plexin. The plexin modulates the affinity of the complex for specific semaphorins, and its cytoplasmic domain is required for the activation of down-stream signaling events in the cytoplasm. Acts as coreceptor of TREM2 for SEMA6D in dendritic cells and is involved in the generation of immune responses and skeletal homeostasis. This chain is Plexin-A1 (Plxna1), found in Mus musculus (Mouse).